The primary structure comprises 396 residues: Acetyl-CoA acetyltransferase (396 aa).

Catalysis depends on C89, which acts as the Acyl-thioester intermediate. Residues 223-225 (RKS) and S249 each bind CoA. Catalysis depends on proton acceptor residues H352 and C382.

The protein belongs to the thiolase-like superfamily. Thiolase family.

The protein localises to the cytoplasm. It catalyses the reaction 2 acetyl-CoA = acetoacetyl-CoA + CoA. Its pathway is lipid metabolism; butanoate metabolism. In terms of biological role, involved in syntrophic growth of S.wolfei with butyrate, as part of the butyrate oxidation pathway. Probably catalyzes the beta-keto thiolysis of acetoacetyl-CoA, leading to 2 acetyl-CoA molecules. In Syntrophomonas wolfei subsp. wolfei (strain DSM 2245B / Goettingen), this protein is Acetyl-CoA acetyltransferase.